We begin with the raw amino-acid sequence, 878 residues long: MGSFRRDKEEEDDGPTNAYQNLEKTSVLQETRTFNETPVNARKCIHILTKILYLINQGETLVPREATDCFFAMTKLFQSKDVVLRRMVYLGIKELSSVAEDVIIVTSSLTKDMTGKEDLYRAAAIRALCSITDHTMLQAVERYMKQCIVDKNAAVSCAALVSSLRLATTAGDVVKRWANEAQEAMNSDNIMVQYHALGLLYHIRKSDRLAVSKLVNKLTRSSLKSPYAVCMLIRIACKLIEEEDIPSEELSDSPLFTFIETCLRHKSEMVIYEAAHAIVNLKNTNHRMLSPAFSILQLFCSSPKATLRFAAVRTLNKVAMTHPAAVTTCNLDLEGLITDSNRSVATLAITTLLKTGAESSVERLMKQISTFVAEISDEFKIVVVQAICALCTKYPRKHTVLMNFLSGMLREEGGLEYKTSIVDTIITIIEENADAKESGLSHLCEFIEDCEHVSLAVRILHLMGKEGPFAATPSKYIRFIYNRVILESPIVRAAAVTALSQFGASCPALLTNILVLLGRCQMDPDDEVRDRATYYLTILNTERADLYKNYIIERENCSLALLEKALVDHLNGDLEKRFDISVVPKAAAVVRAEISNDVMLVTSAPRPPKITREEESASRLAQLPGIQVLGPVHRSTAPIQLTESETEYTVQCIKHIFGQHVVFQFDCLNTLSDQFLENVRVELTLPEGFTTRAVVPCPKLPYNELQTTYVIVEFPPDAGSSIATFGATLRFVVKDCDPNTGEPDSEEGYDDEYMLEDMEITVADQIQKSKKNNFQVAWDAADSEEWLQAEDTFVLSAVTTLQDAVNTIMKILGLGSANLSEKVPEGTHLHTLLCSGTFRGGAEVLVRAKLALSEGVTLNLTVRSTDQDVAELITAAIG.

HEAT repeat units lie at residues 64-101 (REAT…VAED), 287-324 (RMLS…THPA), 326-359 (VTTC…GAES), 360-396 (SVER…KYPR), 399-434 (TVLM…ENAD), and 471-508 (ATPS…SCPA).

The protein belongs to the COPG family. Oligomeric complex that consists of at least the alpha, beta, beta', gamma, delta, epsilon and zeta subunits.

Its subcellular location is the cytoplasm. The protein localises to the golgi apparatus membrane. It is found in the cytoplasmic vesicle. It localises to the COPI-coated vesicle membrane. The protein resides in the endoplasmic reticulum. In terms of biological role, the coatomer is a cytosolic protein complex that binds to dilysine motifs and reversibly associates with Golgi non-clathrin-coated vesicles, which further mediate biosynthetic protein transport from the ER, via the Golgi up to the trans Golgi network. Coatomer complex is required for budding from Golgi membranes, and is essential for the retrograde Golgi-to-ER transport of dilysine-tagged proteins. Required for limiting lipid storage in lipid droplets. Involved in the expansion of luminal extracellular matrices and apical membrane during tubulogenesis. Required in the tracheal epithelium for luminal protein secretion and diametric tube growth. In salivary glands, required for deposition of O-glycans and luminal extracellular matrix assembly. Required for epidermal morphogenesis and cuticle development. In Drosophila pseudoobscura pseudoobscura (Fruit fly), this protein is Coatomer subunit gamma.